The chain runs to 22 residues: Caerin-3.1 (22 aa).

K22 carries the lysine amide modification.

It belongs to the frog skin active peptide (FSAP) family. Caerin subfamily. As to expression, expressed by the skin dorsal glands.

The protein resides in the secreted. Antibacterial peptide with narrow spectrum of activity. Inhibits the formation of NO by neuronal nitric oxide synthase. The sequence is that of Caerin-3.1 from Litoria rothii (Roth's tree frog).